We begin with the raw amino-acid sequence, 230 residues long: Uracil-DNA glycosylase (230 aa).

D70 (proton acceptor) is an active-site residue.

It belongs to the uracil-DNA glycosylase (UDG) superfamily. UNG family.

It localises to the cytoplasm. The enzyme catalyses Hydrolyzes single-stranded DNA or mismatched double-stranded DNA and polynucleotides, releasing free uracil.. Functionally, excises uracil residues from the DNA which can arise as a result of misincorporation of dUMP residues by DNA polymerase or due to deamination of cytosine. The protein is Uracil-DNA glycosylase of Pseudomonas putida (strain W619).